Here is a 250-residue protein sequence, read N- to C-terminus: Uracil-DNA glycosylase (250 aa).

The active-site Proton acceptor is the Asp78. The disordered stretch occupies residues 228-250 (RGQKPVDWSGEQNNASRQGKFAL).

This sequence belongs to the uracil-DNA glycosylase (UDG) superfamily. UNG family.

It is found in the cytoplasm. The enzyme catalyses Hydrolyzes single-stranded DNA or mismatched double-stranded DNA and polynucleotides, releasing free uracil.. In terms of biological role, excises uracil residues from the DNA which can arise as a result of misincorporation of dUMP residues by DNA polymerase or due to deamination of cytosine. The protein is Uracil-DNA glycosylase of Bordetella bronchiseptica (strain ATCC BAA-588 / NCTC 13252 / RB50) (Alcaligenes bronchisepticus).